The following is a 189-amino-acid chain: MIQPEEAERLRGVTVYLIGMMASGKSTLGAELAAQLRRPFFDTDALVEQVAGCSIAQIFAEQGEAHFRELETQVLAQLSGYTRLVVATGGGIVLRPKNWSYLHHGLTVWLDAAPELIWQRLKRDPGQRPLLQTPDPQAALQRLMQEREPFYAQADVRVPIHSEASPSQLAEQVWQAICARLRAQPPCNR.

ATP is bound at residue 22-27 (ASGKST). S26 contacts Mg(2+). The substrate site is built by D44, R68, and G90. R128 is a binding site for ATP. Position 147 (R147) interacts with substrate.

Belongs to the shikimate kinase family. As to quaternary structure, monomer. Mg(2+) is required as a cofactor.

The protein resides in the cytoplasm. The catalysed reaction is shikimate + ATP = 3-phosphoshikimate + ADP + H(+). The protein operates within metabolic intermediate biosynthesis; chorismate biosynthesis; chorismate from D-erythrose 4-phosphate and phosphoenolpyruvate: step 5/7. Its function is as follows. Catalyzes the specific phosphorylation of the 3-hydroxyl group of shikimic acid using ATP as a cosubstrate. The protein is Shikimate kinase of Synechococcus sp. (strain JA-3-3Ab) (Cyanobacteria bacterium Yellowstone A-Prime).